Consider the following 142-residue polypeptide: UPF0102 protein Bcen2424_0290 (142 aa).

Residues 1 to 19 are compositionally biased toward low complexity; that stretch reads MCHAAPARPEGARGRPPSG. Residues 1–27 form a disordered region; the sequence is MCHAAPARPEGARGRPPSGDNFSGAAR.

The protein belongs to the UPF0102 family.

This Burkholderia cenocepacia (strain HI2424) protein is UPF0102 protein Bcen2424_0290.